A 285-amino-acid chain; its full sequence is 2,3,4,5-tetrahydropyridine-2,6-dicarboxylate N-succinyltransferase (285 aa).

Arg111 and Asp148 together coordinate substrate.

The protein belongs to the transferase hexapeptide repeat family. In terms of assembly, homotrimer.

It localises to the cytoplasm. The catalysed reaction is (S)-2,3,4,5-tetrahydrodipicolinate + succinyl-CoA + H2O = (S)-2-succinylamino-6-oxoheptanedioate + CoA. The protein operates within amino-acid biosynthesis; L-lysine biosynthesis via DAP pathway; LL-2,6-diaminopimelate from (S)-tetrahydrodipicolinate (succinylase route): step 1/3. This is 2,3,4,5-tetrahydropyridine-2,6-dicarboxylate N-succinyltransferase from Sinorhizobium fredii (strain NBRC 101917 / NGR234).